A 186-amino-acid chain; its full sequence is Signal peptidase I (186 aa).

The Cytoplasmic segment spans residues 1–19 (MTEEKSTNKKNSLFEWVKA). Residues 20 to 40 (IIIAVVLALLIRAFLFEPYLV) form a helical membrane-spanning segment. Over 41-186 (EGTSMDPTLH…FPFNEIRKTD (146 aa)) the chain is Extracellular. Residues Ser-44 and Lys-86 contribute to the active site.

Belongs to the peptidase S26 family.

The protein localises to the cell membrane. The enzyme catalyses Cleavage of hydrophobic, N-terminal signal or leader sequences from secreted and periplasmic proteins.. The polypeptide is Signal peptidase I (lepB) (Bacillus licheniformis).